A 273-amino-acid chain; its full sequence is Large ribosomal subunit protein uL2 (273 aa).

A disordered region spans residues arginine 221–threonine 263. The segment covering lysine 253 to threonine 263 has biased composition (basic residues).

The protein belongs to the universal ribosomal protein uL2 family. In terms of assembly, part of the 50S ribosomal subunit. Forms a bridge to the 30S subunit in the 70S ribosome.

Its function is as follows. One of the primary rRNA binding proteins. Required for association of the 30S and 50S subunits to form the 70S ribosome, for tRNA binding and peptide bond formation. It has been suggested to have peptidyltransferase activity; this is somewhat controversial. Makes several contacts with the 16S rRNA in the 70S ribosome. This is Large ribosomal subunit protein uL2 from Buchnera aphidicola subsp. Baizongia pistaciae (strain Bp).